The sequence spans 563 residues: Type 2 DNA topoisomerase 6 subunit B (563 aa).

Residues Asn-46, Asp-78, 99–100 (TK), 109–116 (GQQGIGIS), and Lys-471 contribute to the ATP site.

The protein belongs to the TOP6B family. In terms of assembly, homodimer. Heterotetramer of two Top6A and two Top6B chains.

The catalysed reaction is ATP-dependent breakage, passage and rejoining of double-stranded DNA.. Its function is as follows. Relaxes both positive and negative superturns and exhibits a strong decatenase activity. This chain is Type 2 DNA topoisomerase 6 subunit B, found in Thermococcus onnurineus (strain NA1).